Consider the following 138-residue polypeptide: Basic phospholipase A2 homolog ammodytin L (138 aa).

The signal sequence occupies residues 1–16; the sequence is MRILWIVAVCLIGVEG. Intrachain disulfides connect Cys42–Cys131, Cys44–Cys60, Cys59–Cys111, Cys65–Cys138, Cys66–Cys104, Cys73–Cys97, and Cys91–Cys102. Residues 121–133 are important for membrane-damaging activities in eukaryotes and bacteria; heparin-binding; the sequence is KKYKVYLRFKCKG.

It belongs to the phospholipase A2 family. Group II subfamily. S49 sub-subfamily. Expressed by the venom gland.

Its subcellular location is the secreted. Functionally, snake venom phospholipase A2 homolog that lacks enzymatic activity. Is very active in inducing myonecrosis in vivo and shows a potent calcium-independent membrane-damaging activity in vitro, most probably by binding and incorporating in the membrane. Also acts as a presynaptic neurotoxin. A model of myotoxic mechanism has been proposed: an apo Lys49-PLA2 is activated by the entrance of a hydrophobic molecule (e.g. fatty acid) at the hydrophobic channel of the protein leading to a reorientation of a monomer. This reorientation causes a transition between 'inactive' to 'active' states, causing alignment of C-terminal and membrane-docking sites (MDoS) side-by-side and putting the membrane-disruption sites (MDiS) in the same plane, exposed to solvent and in a symmetric position for both monomers. The MDoS region stabilizes the toxin on membrane by the interaction of charged residues with phospholipid head groups. Subsequently, the MDiS region destabilizes the membrane with penetration of hydrophobic residues. This insertion causes a disorganization of the membrane, allowing an uncontrolled influx of ions (i.e. calcium and sodium), and eventually triggering irreversible intracellular alterations and cell death. The protein is Basic phospholipase A2 homolog ammodytin L of Vipera ammodytes ammodytes (Western sand viper).